A 230-amino-acid chain; its full sequence is 5'-methylthioadenosine/S-adenosylhomocysteine nucleosidase (230 aa).

Catalysis depends on glutamate 12, which acts as the Proton acceptor. Residues glycine 78, isoleucine 153, and 174 to 175 (ME) each bind substrate. The Proton donor role is filled by aspartate 198.

Belongs to the PNP/UDP phosphorylase family. MtnN subfamily.

It catalyses the reaction S-adenosyl-L-homocysteine + H2O = S-(5-deoxy-D-ribos-5-yl)-L-homocysteine + adenine. It carries out the reaction S-methyl-5'-thioadenosine + H2O = 5-(methylsulfanyl)-D-ribose + adenine. The catalysed reaction is 5'-deoxyadenosine + H2O = 5-deoxy-D-ribose + adenine. It participates in amino-acid biosynthesis; L-methionine biosynthesis via salvage pathway; S-methyl-5-thio-alpha-D-ribose 1-phosphate from S-methyl-5'-thioadenosine (hydrolase route): step 1/2. Catalyzes the irreversible cleavage of the glycosidic bond in both 5'-methylthioadenosine (MTA) and S-adenosylhomocysteine (SAH/AdoHcy) to adenine and the corresponding thioribose, 5'-methylthioribose and S-ribosylhomocysteine, respectively. Also cleaves 5'-deoxyadenosine, a toxic by-product of radical S-adenosylmethionine (SAM) enzymes, into 5-deoxyribose and adenine. This is 5'-methylthioadenosine/S-adenosylhomocysteine nucleosidase from Shewanella sediminis (strain HAW-EB3).